The primary structure comprises 341 residues: Undecaprenyl-phosphate 4-deoxy-4-formamido-L-arabinose transferase (341 aa).

The next 2 helical transmembrane spans lie at 235–255 (LSIVGFSLAALGMLFAFALIV) and 269–289 (LFVLFAVLFVFTGGQFIGMGL).

The protein belongs to the glycosyltransferase 2 family.

Its subcellular location is the cell inner membrane. It catalyses the reaction UDP-4-deoxy-4-formamido-beta-L-arabinose + di-trans,octa-cis-undecaprenyl phosphate = 4-deoxy-4-formamido-alpha-L-arabinopyranosyl di-trans,octa-cis-undecaprenyl phosphate + UDP. The protein operates within glycolipid biosynthesis; 4-amino-4-deoxy-alpha-L-arabinose undecaprenyl phosphate biosynthesis; 4-amino-4-deoxy-alpha-L-arabinose undecaprenyl phosphate from UDP-4-deoxy-4-formamido-beta-L-arabinose and undecaprenyl phosphate: step 1/2. It functions in the pathway bacterial outer membrane biogenesis; lipopolysaccharide biosynthesis. Its function is as follows. Catalyzes the transfer of 4-deoxy-4-formamido-L-arabinose from UDP to undecaprenyl phosphate. The modified arabinose is attached to lipid A and is required for resistance to polymyxin and cationic antimicrobial peptides. This Pseudomonas fluorescens (strain SBW25) protein is Undecaprenyl-phosphate 4-deoxy-4-formamido-L-arabinose transferase.